Here is a 323-residue protein sequence, read N- to C-terminus: Penicillopepsin-1 (323 aa).

An O-linked (Man...) serine glycan is attached at serine 3. Threonine 7 carries an O-linked (Man...) threonine glycan. Positions 17–320 constitute a Peptidase A1 domain; the sequence is YITPVTIGGT…DSDGPQLGFA (304 aa). Catalysis depends on residues aspartate 33 and aspartate 213. Cysteine 249 and cysteine 283 are oxidised to a cystine.

It belongs to the peptidase A1 family. In terms of assembly, monomer.

It localises to the secreted. It catalyses the reaction Hydrolysis of proteins with broad specificity similar to that of pepsin A, preferring hydrophobic residues at P1 and P1', but also cleaving 20-Gly-|-Glu-21 in the B chain of insulin. Clots milk, and activates trypsinogen.. Functionally, secreted aspartic endopeptidase that allows assimilation of proteinaceous substrates. The scissile peptide bond is attacked by a nucleophilic water molecule activated by two aspartic residues in the active site. Shows a broad primary substrate specificity. Favors hydrophobic residues at the P1 and P1' positions, but can also activate trypsinogen and hydrolyze the B chain of insulin between positions 'Gly-20' and 'Glu-21'. In Penicillium janthinellum (Penicillium vitale), this protein is Penicillopepsin-1.